The sequence spans 309 residues: Olfactory receptor-like protein OLF4 (309 aa).

The Extracellular segment spans residues 1-25; that stretch reads MELENDTRIPEFLLLGFSEEPKLQP. A glycan (N-linked (GlcNAc...) asparagine) is linked at Asn5. Residues 26–49 traverse the membrane as a helical segment; that stretch reads FLFGLFLSMYLVTILGNLLLILAV. Over 50–57 the chain is Cytoplasmic; sequence SSDSHLHT. The chain crosses the membrane as a helical span at residues 58–79; the sequence is PMYFFLANLSFVDICFTCTTIP. Residues 80–100 lie on the Extracellular side of the membrane; sequence KMLVNIQTQRKVITYESCIIQ. Residues 101–120 traverse the membrane as a helical segment; that stretch reads MYFFELFAGIDNFLLTVMAY. Residues 121 to 139 are Cytoplasmic-facing; the sequence is DRYMAICYPLHYMVIMNPQ. A helical membrane pass occupies residues 140 to 158; the sequence is LCSLLLLVSWIMSALHSLL. Residues 159 to 196 lie on the Extracellular side of the membrane; it reads QTLMVLRLSFCTHFQIPHFFCELNQMIQLACSDTFLNN. Residues 197 to 219 traverse the membrane as a helical segment; the sequence is MMLYFAAILLGVAPLVGVLYSYF. Over 220-236 the chain is Cytoplasmic; that stretch reads KIVSSIRGISSAHSKYK. A helical transmembrane segment spans residues 237-260; that stretch reads AFSTCASHLSVVSLFYCTSLGVYL. Topologically, residues 261 to 272 are extracellular; sequence SSAAPQSTHTSS. A helical membrane pass occupies residues 273–292; it reads VASVMYTVVTPMLNPFIYSL. The Cytoplasmic portion of the chain corresponds to 293–309; the sequence is RNKDIKGALNVFFRGKP.

It belongs to the G-protein coupled receptor 1 family.

The protein resides in the cell membrane. Its function is as follows. Putative odorant or sperm cell receptor. The chain is Olfactory receptor-like protein OLF4 from Canis lupus familiaris (Dog).